A 120-amino-acid chain; its full sequence is Chaperonin GroEL (120 aa).

23–27 (DGTTT) is a binding site for ATP.

This sequence belongs to the chaperonin (HSP60) family. Forms a cylinder of 14 subunits composed of two heptameric rings stacked back-to-back. Interacts with the co-chaperonin GroES.

It is found in the cytoplasm. The enzyme catalyses ATP + H2O + a folded polypeptide = ADP + phosphate + an unfolded polypeptide.. Its function is as follows. Together with its co-chaperonin GroES, plays an essential role in assisting protein folding. The GroEL-GroES system forms a nano-cage that allows encapsulation of the non-native substrate proteins and provides a physical environment optimized to promote and accelerate protein folding. This chain is Chaperonin GroEL, found in Mycobacterium xenopi.